Consider the following 318-residue polypeptide: Homoserine kinase (318 aa).

Residue Pro97 to Cys107 participates in ATP binding.

Belongs to the GHMP kinase family. Homoserine kinase subfamily.

It is found in the cytoplasm. It catalyses the reaction L-homoserine + ATP = O-phospho-L-homoserine + ADP + H(+). It functions in the pathway amino-acid biosynthesis; L-threonine biosynthesis; L-threonine from L-aspartate: step 4/5. In terms of biological role, catalyzes the ATP-dependent phosphorylation of L-homoserine to L-homoserine phosphate. The sequence is that of Homoserine kinase from Aliivibrio salmonicida (strain LFI1238) (Vibrio salmonicida (strain LFI1238)).